The sequence spans 237 residues: AA9 family lytic polysaccharide monooxygenase C (237 aa).

The signal sequence occupies residues 1-15 (MKVLAPLILAGAASA). Cu(2+)-binding residues include H16 and H99. Disulfide bonds link C54–C185 and C155–C237. N112 carries an N-linked (GlcNAc...) asparagine glycan. H171 and Q180 together coordinate O2. Y182 serves as a coordination point for Cu(2+).

It belongs to the polysaccharide monooxygenase AA9 family. Cu(2+) is required as a cofactor.

It localises to the secreted. The enzyme catalyses [(1-&gt;4)-beta-D-glucosyl]n+m + reduced acceptor + O2 = 4-dehydro-beta-D-glucosyl-[(1-&gt;4)-beta-D-glucosyl]n-1 + [(1-&gt;4)-beta-D-glucosyl]m + acceptor + H2O.. Is able to utilize various natural phenolic compounds as reducing agents. Most of these reducing agents are present in plants, either free or as lignin building blocks, such as sinapic acid, or as flavonoids such as catechin and dopamine. Phenolic compounds with 1,2-benzenediol and 1,2,3-benzenetriol moieties yield the highest release of oxidized and non-oxidized glucooligosaccharides from cellulose compared to monophenols or sulfur-containing compounds. Its function is as follows. Lytic polysaccharide monooxygenase (LPMO) that depolymerizes crystalline and amorphous polysaccharides via the oxidation of scissile alpha- or beta-(1-4)-glycosidic bonds, yielding C4 oxidation products. Catalysis by LPMOs requires the reduction of the active-site copper from Cu(II) to Cu(I) by a reducing agent and H(2)O(2) or O(2) as a cosubstrate. Shows oxidative cleavage of beta-(1-3, 1-4)-glucan from oat spelt or xyloglucan from tamarind seed, in addition to cellulose. This chain is AA9 family lytic polysaccharide monooxygenase C, found in Thermothelomyces thermophilus (strain ATCC 42464 / BCRC 31852 / DSM 1799) (Sporotrichum thermophile).